The sequence spans 57 residues: uncharacterized protein (57 aa).

A run of 2 helical transmembrane segments spans residues 2-22 (LLVVIFGLVALFALWGVLRSV) and 29-49 (GFLLAGATLFVFGWFTVMTVI).

It localises to the cell membrane. This is an uncharacterized protein from Bacillus subtilis (strain 168).